Reading from the N-terminus, the 483-residue chain is Galactose-3-O-sulfotransferase 4 (483 aa).

Topologically, residues 1–18 (MGVLSPTRTMRLWGPRSL) are cytoplasmic. The chain crosses the membrane as a helical; Signal-anchor for type II membrane protein span at residues 19–39 (GVALGVFMTIGFALQLLGGPF). Residues 40 to 483 (QRRLPGLQLR…PLKTSRRPSP (444 aa)) lie on the Lumenal side of the membrane. Residues 225–248 (KRGNPHVSRDPNPPQLPSGAGPPA) form a disordered region. N-linked (GlcNAc...) asparagine glycosylation is present at N371.

Belongs to the galactose-3-O-sulfotransferase family. The cofactor is Mn(2+).

It is found in the golgi apparatus. The protein localises to the golgi stack membrane. It participates in protein modification; carbohydrate sulfation. Catalyzes the transfer of sulfate to beta-1,3-linked galactose residues in O-linked glycoproteins. Good substrates include asialofetuin, Gal-beta-1,3-GalNAc and Gal-beta-1,3 (GlcNAc-beta-1,6)GalNAc. The chain is Galactose-3-O-sulfotransferase 4 (GAL3ST4) from Bos taurus (Bovine).